Here is a 645-residue protein sequence, read N- to C-terminus: Chaperone protein DnaK (645 aa).

A Phosphothreonine; by autocatalysis modification is found at threonine 199. Disordered regions lie at residues 509–530 (GALS…AEED) and 615–645 (EAGA…EVKE). Residues 518–530 (QMQKDAEANAEED) are compositionally biased toward basic and acidic residues. The span at 615–626 (EAGADAAGAAGA) shows a compositional bias: low complexity. Acidic residues predominate over residues 631-645 (GDDDDAIDAEFEVKE).

It belongs to the heat shock protein 70 family.

Acts as a chaperone. In Rhodopirellula baltica (strain DSM 10527 / NCIMB 13988 / SH1), this protein is Chaperone protein DnaK.